An 86-amino-acid chain; its full sequence is MSQEPPARPDPATLSYEQARAELVDVVQRLEQGAATLEDSLALWERGEALAARCQEWLDGARDRLARVSPASGGATEAPAPAERDR.

Residues 67-86 (RVSPASGGATEAPAPAERDR) are disordered.

Belongs to the XseB family. As to quaternary structure, heterooligomer composed of large and small subunits.

Its subcellular location is the cytoplasm. The catalysed reaction is Exonucleolytic cleavage in either 5'- to 3'- or 3'- to 5'-direction to yield nucleoside 5'-phosphates.. Functionally, bidirectionally degrades single-stranded DNA into large acid-insoluble oligonucleotides, which are then degraded further into small acid-soluble oligonucleotides. This is Exodeoxyribonuclease 7 small subunit from Beutenbergia cavernae (strain ATCC BAA-8 / DSM 12333 / CCUG 43141 / JCM 11478 / NBRC 16432 / NCIMB 13614 / HKI 0122).